Reading from the N-terminus, the 937-residue chain is Aconitate hydratase A (937 aa).

Residues cysteine 439, cysteine 505, and cysteine 508 each contribute to the [4Fe-4S] cluster site. Residues 898-921 are disordered; sequence KKESKSTQSTTSKGCGSADTSSET.

Belongs to the aconitase/IPM isomerase family. In terms of assembly, monomer. [4Fe-4S] cluster serves as cofactor.

The enzyme catalyses citrate = D-threo-isocitrate. The catalysed reaction is (2S,3R)-3-hydroxybutane-1,2,3-tricarboxylate = 2-methyl-cis-aconitate + H2O. It functions in the pathway carbohydrate metabolism; tricarboxylic acid cycle; isocitrate from oxaloacetate: step 2/2. The protein operates within organic acid metabolism; propanoate degradation. Its function is as follows. Involved in the catabolism of short chain fatty acids (SCFA) via the tricarboxylic acid (TCA)(acetyl degradation route) and probably the 2-methylcitrate cycle I (propionate degradation route). Catalyzes the reversible isomerization of citrate to isocitrate via cis-aconitate. Could catalyze the hydration of 2-methyl-cis-aconitate to yield (2R,3S)-2-methylisocitrate. The apo form of AcnA functions as a RNA-binding regulatory protein. This is Aconitate hydratase A (acn) from Francisella tularensis subsp. holarctica (strain LVS).